The sequence spans 1189 residues: Origin recognition complex subunit 1 (1189 aa).

Residues 1–53 (MTPKKKIFQNFQANDNEILSPTKKGIKLNVSKLNILNFENTIITKEKTNYEYK) are required for peripherial nuclear localization. At T2 the chain carries Phosphothreonine. Phosphoserine is present on S20. Leucine heptad repeat repeat units lie at residues 137–143 (LTNISSS), 144–150 (LTNISSS), 151–157 (LTNISSS), and 158–164 (LSNSLDE). A compositionally biased stretch (basic residues) spans 239–248 (KKNISKKNTH). Disordered stretches follow at residues 239–421 (KKNI…DHTD) and 679–749 (DTQA…QSSL). A compositionally biased stretch (basic and acidic residues) spans 254–279 (QNDKNKEKNKEKDKNIKKDRDKDIQT). The span at 304–320 (NNDNVKNNLKNNINNNN) shows a compositional bias: low complexity. The span at 321–339 (TLKRSSQSVRIDSDLSSAH) shows a compositional bias: polar residues. A compositionally biased stretch (low complexity) spans 353 to 381 (HRNNNNNNNNNNKTTSNNHNKNNKINNNN). Residues 385-394 (NYKKQTDTKH) show a composition bias toward basic and acidic residues. Over residues 395–411 (TNNTQNNKYNKTKTTNT) the composition is skewed to low complexity. Positions 695-709 (KAQTTTNVKANTHTK) are enriched in polar residues. Basic and acidic residues-rich tracts occupy residues 710–724 (TLNDHNKSKTTKNKE) and 733–742 (DVKKKSDPHN). Residues V780 and 815-823 (GMPGTGKTA) each bind ATP. Residues D903 and E904 each coordinate Mg(2+). E904 lines the ATP pocket. A PIP-box motif is present at residues 913 to 922 (QKVLFTLFDW). ATP-binding residues include N937 and R1003.

The protein belongs to the ORC1 family. In terms of assembly, component of the origin recognition complex (ORC). Interacts (via PIP-box) with PCNA1; the interaction occurs during DNA replication in trophozoites. In schizonts, may be phosphorylated by PK5; phosphorylation leads to ORC1 dissociation from the telomeres and var gene promoters, translocation to the cytoplasm, where it is degraded by the proteasome.

The protein resides in the nucleus. The protein localises to the chromosome. It is found in the telomere. It localises to the nucleolus. The catalysed reaction is ATP + H2O = ADP + phosphate + H(+). Its function is as follows. Component of the origin recognition complex (ORC) that binds origins of replication and thus may regulate the initiation of DNA replication. DNA-binding may not be ATP-dependent. In a SIR2A/Sir2-dependent manner, binds to and silences telomers and subtelomeric repeat regions (TAREs). In a SIR2A/Sir2-dependent manner, binds to promoters of var genes localized next to TAREs resulting in their silencing. The chain is Origin recognition complex subunit 1 from Plasmodium falciparum (isolate 3D7).